Here is a 432-residue protein sequence, read N- to C-terminus: Queuine tRNA-ribosyltransferase accessory subunit 2 (432 aa).

Cys329, Cys331, Cys334, and His360 together coordinate Zn(2+). The segment at 390–432 (GQKSLPPYEPPKEEKLPMPAAQKAELMEPMEDLGEKQNKKQRA) is disordered. Basic and acidic residues predominate over residues 422–432 (LGEKQNKKQRA).

Belongs to the queuine tRNA-ribosyltransferase family. QTRT2 subfamily. As to quaternary structure, heterodimer of a catalytic subunit and an accessory subunit. Zn(2+) is required as a cofactor.

It is found in the cytoplasm. In terms of biological role, non-catalytic subunit of the queuine tRNA-ribosyltransferase (TGT) that catalyzes the base-exchange of a guanine (G) residue with queuine (Q) at position 34 (anticodon wobble position) in tRNAs with GU(N) anticodons (tRNA-Asp, -Asn, -His and -Tyr), resulting in the hypermodified nucleoside queuosine (7-(((4,5-cis-dihydroxy-2-cyclopenten-1-yl)amino)methyl)-7-deazaguanosine). In Anopheles gambiae (African malaria mosquito), this protein is Queuine tRNA-ribosyltransferase accessory subunit 2.